The chain runs to 236 residues: SPbeta prophage-derived uncharacterized lipoprotein YokB (236 aa).

The signal sequence occupies residues 1 to 19 (MNIRFSMLVCVSFIFFTGG). A lipid anchor (N-palmitoyl cysteine) is attached at cysteine 20. Cysteine 20 is lipidated: S-diacylglycerol cysteine. Disordered regions lie at residues 23-59 (SSAN…TPNM) and 204-236 (VKKV…KDNK). The segment covering 31–53 (SKNKNESKEESSEEGVKENDNKL) has biased composition (basic and acidic residues).

It localises to the cell membrane. This Bacillus subtilis (strain 168) protein is SPbeta prophage-derived uncharacterized lipoprotein YokB (yokB).